The sequence spans 286 residues: Nucleotide-binding protein APL_0334 (286 aa).

Residue 8–15 coordinates ATP; it reads GRSGSGKS. GTP is bound at residue 56–59; it reads DIRN.

The protein belongs to the RapZ-like family.

Functionally, displays ATPase and GTPase activities. This Actinobacillus pleuropneumoniae serotype 5b (strain L20) protein is Nucleotide-binding protein APL_0334.